The following is a 158-amino-acid chain: Phosphopantetheine adenylyltransferase (158 aa).

Position 8 (Ser8) interacts with substrate. Residues 8 to 9 (SF) and His16 each bind ATP. Substrate is bound by residues Lys40, Thr72, and Arg86. ATP contacts are provided by residues 87-89 (GLR), Glu97, and 122-128 (HSFLSSS).

This sequence belongs to the bacterial CoaD family. In terms of assembly, homohexamer. It depends on Mg(2+) as a cofactor.

It localises to the cytoplasm. The catalysed reaction is (R)-4'-phosphopantetheine + ATP + H(+) = 3'-dephospho-CoA + diphosphate. It functions in the pathway cofactor biosynthesis; coenzyme A biosynthesis; CoA from (R)-pantothenate: step 4/5. Its function is as follows. Reversibly transfers an adenylyl group from ATP to 4'-phosphopantetheine, yielding dephospho-CoA (dPCoA) and pyrophosphate. The sequence is that of Phosphopantetheine adenylyltransferase from Prochlorococcus marinus (strain NATL1A).